Here is a 156-residue protein sequence, read N- to C-terminus: ATP synthase subunit b (156 aa).

A helical membrane pass occupies residues 7–29; the sequence is LLGQAIAFALFVWFCMKYVWPPI.

This sequence belongs to the ATPase B chain family. As to quaternary structure, F-type ATPases have 2 components, F(1) - the catalytic core - and F(0) - the membrane proton channel. F(1) has five subunits: alpha(3), beta(3), gamma(1), delta(1), epsilon(1). F(0) has three main subunits: a(1), b(2) and c(10-14). The alpha and beta chains form an alternating ring which encloses part of the gamma chain. F(1) is attached to F(0) by a central stalk formed by the gamma and epsilon chains, while a peripheral stalk is formed by the delta and b chains.

Its subcellular location is the cell inner membrane. Functionally, f(1)F(0) ATP synthase produces ATP from ADP in the presence of a proton or sodium gradient. F-type ATPases consist of two structural domains, F(1) containing the extramembraneous catalytic core and F(0) containing the membrane proton channel, linked together by a central stalk and a peripheral stalk. During catalysis, ATP synthesis in the catalytic domain of F(1) is coupled via a rotary mechanism of the central stalk subunits to proton translocation. In terms of biological role, component of the F(0) channel, it forms part of the peripheral stalk, linking F(1) to F(0). The chain is ATP synthase subunit b from Aliivibrio salmonicida (strain LFI1238) (Vibrio salmonicida (strain LFI1238)).